The following is a 151-amino-acid chain: Transcriptional regulator MraZ (151 aa).

2 consecutive SpoVT-AbrB domains span residues 5–51 (AHEL…PVAE) and 81–124 (AEIL…GREQ).

The protein belongs to the MraZ family. Forms oligomers.

It localises to the cytoplasm. Its subcellular location is the nucleoid. The polypeptide is Transcriptional regulator MraZ (Neisseria gonorrhoeae (strain ATCC 700825 / FA 1090)).